The chain runs to 482 residues: UDP-N-acetylmuramate--L-alanine ligase (482 aa).

Residue 123 to 129 (GTHGKTT) participates in ATP binding.

Belongs to the MurCDEF family.

The protein resides in the cytoplasm. It catalyses the reaction UDP-N-acetyl-alpha-D-muramate + L-alanine + ATP = UDP-N-acetyl-alpha-D-muramoyl-L-alanine + ADP + phosphate + H(+). The protein operates within cell wall biogenesis; peptidoglycan biosynthesis. Functionally, cell wall formation. The chain is UDP-N-acetylmuramate--L-alanine ligase from Pseudomonas putida (strain W619).